We begin with the raw amino-acid sequence, 231 residues long: Sensory transduction protein BceR (231 aa).

The Response regulatory domain occupies 3–116 (KIMLIEDDHT…VLVAKIQAIL (114 aa)). D52 is subject to 4-aspartylphosphate. The ompR/PhoB-type DNA-binding region spans 127-225 (TQLKTWCGAT…KVGQGYMAKE (99 aa)).

In terms of processing, phosphorylated by BceS.

The protein resides in the cytoplasm. In terms of biological role, member of the two-component regulatory system BceS/BceR involved in the regulation of bacitracin resistance. When activated by BceS, binds to the upstream region of the bceAB promoter and up-regulates the expression of these two genes. The protein is Sensory transduction protein BceR (bceR) of Halalkalibacterium halodurans (strain ATCC BAA-125 / DSM 18197 / FERM 7344 / JCM 9153 / C-125) (Bacillus halodurans).